Consider the following 193-residue polypeptide: Orotate phosphoribosyltransferase (193 aa).

Residues arginine 85, lysine 89, and 111 to 119 (DDVLTTGKS) each bind 5-phospho-alpha-D-ribose 1-diphosphate. Orotate-binding residues include threonine 115 and arginine 143.

It belongs to the purine/pyrimidine phosphoribosyltransferase family. PyrE subfamily. In terms of assembly, homodimer. Mg(2+) is required as a cofactor.

It carries out the reaction orotidine 5'-phosphate + diphosphate = orotate + 5-phospho-alpha-D-ribose 1-diphosphate. Its pathway is pyrimidine metabolism; UMP biosynthesis via de novo pathway; UMP from orotate: step 1/2. Its function is as follows. Catalyzes the transfer of a ribosyl phosphate group from 5-phosphoribose 1-diphosphate to orotate, leading to the formation of orotidine monophosphate (OMP). This chain is Orotate phosphoribosyltransferase, found in Pyrobaculum aerophilum (strain ATCC 51768 / DSM 7523 / JCM 9630 / CIP 104966 / NBRC 100827 / IM2).